Reading from the N-terminus, the 236-residue chain is NAD(P)H-hydrate epimerase (236 aa).

Positions 11 to 217 constitute a YjeF N-terminal domain; it reads AAALDQELMS…AIASKYGFEV (207 aa). 61 to 65 contributes to the (6S)-NADPHX binding site; sequence NNGGD. Positions 62 and 123 each coordinate K(+). (6S)-NADPHX contacts are provided by residues 127–133 and aspartate 156; that span reads GFSFSGE. Serine 159 contacts K(+).

It belongs to the NnrE/AIBP family. It depends on K(+) as a cofactor.

It is found in the cytoplasm. The protein localises to the mitochondrion. It catalyses the reaction (6R)-NADHX = (6S)-NADHX. The catalysed reaction is (6R)-NADPHX = (6S)-NADPHX. In terms of biological role, catalyzes the epimerization of the S- and R-forms of NAD(P)HX, a damaged form of NAD(P)H that is a result of enzymatic or heat-dependent hydration. This is a prerequisite for the S-specific NAD(P)H-hydrate dehydratase to allow the repair of both epimers of NAD(P)HX. In Fusarium vanettenii (strain ATCC MYA-4622 / CBS 123669 / FGSC 9596 / NRRL 45880 / 77-13-4) (Fusarium solani subsp. pisi), this protein is NAD(P)H-hydrate epimerase.